The primary structure comprises 249 residues: Chitooligosaccharide deacetylase (249 aa).

Mg(2+) is bound by residues histidine 61 and histidine 125.

The protein belongs to the YdjC deacetylase family. ChbG subfamily. Homodimer. Mg(2+) serves as cofactor.

The protein resides in the cytoplasm. The catalysed reaction is N,N'-diacetylchitobiose + H2O = N-acetyl-beta-D-glucosaminyl-(1-&gt;4)-D-glucosamine + acetate. It catalyses the reaction diacetylchitobiose-6'-phosphate + H2O = N'-monoacetylchitobiose-6'-phosphate + acetate. Its pathway is glycan degradation; chitin degradation. Involved in the degradation of chitin. ChbG is essential for growth on the acetylated chitooligosaccharides chitobiose and chitotriose but is dispensable for growth on cellobiose and chitosan dimer, the deacetylated form of chitobiose. Deacetylation of chitobiose-6-P and chitotriose-6-P is necessary for both the activation of the chb promoter by the regulatory protein ChbR and the hydrolysis of phosphorylated beta-glucosides by the phospho-beta-glucosidase ChbF. Catalyzes the removal of only one acetyl group from chitobiose-6-P to yield monoacetylchitobiose-6-P, the inducer of ChbR and the substrate of ChbF. The chain is Chitooligosaccharide deacetylase from Escherichia coli O17:K52:H18 (strain UMN026 / ExPEC).